A 426-amino-acid polypeptide reads, in one-letter code: Serine--tRNA ligase (426 aa).

Thr-233–Glu-235 lines the L-serine pocket. Arg-264–Glu-266 contacts ATP. L-serine is bound at residue Glu-287. Residue Glu-351 to Ser-354 coordinates ATP. Ser-387 provides a ligand contact to L-serine.

Belongs to the class-II aminoacyl-tRNA synthetase family. Type-1 seryl-tRNA synthetase subfamily. As to quaternary structure, homodimer. The tRNA molecule binds across the dimer.

The protein resides in the cytoplasm. It catalyses the reaction tRNA(Ser) + L-serine + ATP = L-seryl-tRNA(Ser) + AMP + diphosphate + H(+). It carries out the reaction tRNA(Sec) + L-serine + ATP = L-seryl-tRNA(Sec) + AMP + diphosphate + H(+). It functions in the pathway aminoacyl-tRNA biosynthesis; selenocysteinyl-tRNA(Sec) biosynthesis; L-seryl-tRNA(Sec) from L-serine and tRNA(Sec): step 1/1. In terms of biological role, catalyzes the attachment of serine to tRNA(Ser). Is also able to aminoacylate tRNA(Sec) with serine, to form the misacylated tRNA L-seryl-tRNA(Sec), which will be further converted into selenocysteinyl-tRNA(Sec). In Stutzerimonas stutzeri (strain A1501) (Pseudomonas stutzeri), this protein is Serine--tRNA ligase.